A 168-amino-acid chain; its full sequence is Prespore-specific protein A (168 aa).

An N-terminal signal peptide occupies residues 1–19 (MKFQHTFIALLSLLTYANA). O-linked (GlcNAc) threonine glycosylation is found at T110, T114, T116, T118, T120, T122, T124, T126, T128, T130, T132, T134, and T138. 3 tandem repeats follow at residues 116–119 (TPTV), 120–123 (TPTV), and 124–127 (TPTV). The tract at residues 116-127 (TPTVTPTVTPTV) is 3 X 4 AA tandem repeats of T-P-T-V. Low complexity predominate over residues 116-131 (TPTVTPTVTPTVTPTP). The disordered stretch occupies residues 116–147 (TPTVTPTVTPTVTPTPTNTPNPTPSQTSTTTG). O-linked (GlcNAc) serine glycosylation is present at S140. Residue G147 is the site of GPI-like-anchor amidated glycine attachment. A propeptide spans 148–168 (SASTVVASLSLIIFSMILSLC) (removed in mature form).

This sequence belongs to the ponticulin family. Post-translationally, O-glycosylated in the repeat region. The oligosaccharides contain N-acetylglucosamine and fucose as the major constituents. The GPI-like-anchor contains a phosphoceramide group, rather than a phosphatidyl group.

Its subcellular location is the cell membrane. May bind F-actin and nucleates actin assembly. This Dictyostelium discoideum (Social amoeba) protein is Prespore-specific protein A (pspA).